A 438-amino-acid chain; its full sequence is Transcriptional enhancer factor TEF-3 (438 aa).

The segment covering 1–18 (MTSEWSSPASPEGSNDSG) has biased composition (polar residues). Disordered stretches follow at residues 1–36 (MTSEWSSPASPEGSNDSGGSEALDKPIDNDAEGVWS) and 195–217 (QPSLPLPGFDSPTGLPPSSSTPA). The segment at residues 28–104 (DNDAEGVWSP…QVLARRKARE (77 aa)) is a DNA-binding region (TEA). Residues 205–216 (SPTGLPPSSSTP) show a composition bias toward low complexity.

In terms of tissue distribution, enriched in cardiac and skeletal muscle.

Its subcellular location is the nucleus. Its function is as follows. Transcription factor which plays a key role in the Hippo signaling pathway, a pathway involved in organ size control and tumor suppression by restricting proliferation and promoting apoptosis. The core of this pathway is composed of a kinase cascade wherein MST1/MST2, in complex with its regulatory protein SAV1, phosphorylates and activates LATS1/2 in complex with its regulatory protein MOB1, which in turn phosphorylates and inactivates YAP1 oncoprotein and WWTR1/TAZ. Binds m-cat elements from muscle-specific promoters and differentially activate transcription. Functionally, isoform B has probably a transactivation capacity that is lacking in the other isoforms. Isoform D may be defective in DNA binding. The sequence is that of Transcriptional enhancer factor TEF-3 (TEAD4) from Gallus gallus (Chicken).